Here is a 77-residue protein sequence, read N- to C-terminus: Large ribosomal subunit protein bL28 (77 aa).

The segment at 1-25 (MARVCQVTGKAPMSGNNVSHANNKT) is disordered.

Belongs to the bacterial ribosomal protein bL28 family.

This is Large ribosomal subunit protein bL28 from Paraburkholderia phymatum (strain DSM 17167 / CIP 108236 / LMG 21445 / STM815) (Burkholderia phymatum).